Reading from the N-terminus, the 447-residue chain is C4-dicarboxylate transport protein 3 (447 aa).

The next 8 membrane-spanning stretches (helical) occupy residues 5-27 (TLGK…GVAA), 42-64 (IKLI…IARM), 77-99 (ALVY…VNLV), 146-165 (LARN…GIAL), 186-208 (VFSI…MAFT), 223-245 (LMAT…VARL), 315-337 (IFVA…LGVL), and 352-374 (FITL…VLLL).

Belongs to the dicarboxylate/amino acid:cation symporter (DAACS) (TC 2.A.23) family.

The protein localises to the cell inner membrane. Its function is as follows. Responsible for the transport of dicarboxylates such as succinate, fumarate, and malate from the periplasm across the membrane. This chain is C4-dicarboxylate transport protein 3 (dctA3), found in Ralstonia nicotianae (strain ATCC BAA-1114 / GMI1000) (Ralstonia solanacearum).